The sequence spans 956 residues: Ubiquitin carboxyl-terminal hydrolase CYLD (956 aa).

Positions 106-593 (CEERFSLFKN…LEIMIGKKKG (488 aa)) are interaction with TRIP. 2 consecutive CAP-Gly domains span residues 153 to 198 (LAER…VFVA) and 253 to 286 (DVLP…VQLC). A disordered region spans residues 309-353 (SVTQERRPPKLAFMSRGVGDKGSSSHNKPKATGSTSDPGNRNRSE). The segment covering 330 to 349 (GSSSHNKPKATGSTSDPGNR) has biased composition (polar residues). Position 387 is a phosphoserine (serine 387). The segment at 392-411 (STDFDRSSPPLQPPPVNSLT) is disordered. The tract at residues 394-469 (DFDRSSPPLQ…LAMPPGNSHG (76 aa)) is interaction with TRAF2. Residues serine 418 and serine 422 each carry the phosphoserine modification. Positions 470 to 554 (LEVGSLAEVK…FASLQPVSNQ (85 aa)) are interaction with IKBKG/NEMO. The region spanning 492 to 535 (GQPPGLNEVLAGLELEDECAGCTDGTFRGTRYFTCALKKALFVK) is the CAP-Gly 3 domain. Residues 592 to 950 (KGIQGHYNSC…DAYMCMYQSP (359 aa)) form the USP domain. The active-site Nucleophile is the cysteine 601. A B-box region spans residues 781 to 833 (LEDTPRQCRICGGLAMYECRECYDDPDISAGKIKQFCKTCNTQVHLHPKRLNH). 8 residues coordinate Zn(2+): cysteine 788, cysteine 791, cysteine 799, cysteine 802, cysteine 817, cysteine 820, histidine 825, and histidine 833. Histidine 871 acts as the Proton acceptor in catalysis.

This sequence belongs to the peptidase C19 family. In terms of assembly, interacts (via CAP-Gly domain) with IKBKG/NEMO (via proline-rich C-terminal region). Interacts with TRAF2 and TRIP. Interacts with PLK1, DVL1, DVL3, MAVS, TBK1, IKKE and RIGI. Interacts (via CAP-Gly domain) with microtubules. Interacts with HDAC6 and BCL3. Interacts with MAP3K7. Identified in a complex with TRAF6 and SQSTM1. Interacts with OPTN and SQSTM1. Interacts with CEP350. Interacts with RNF31; the interaction is indirect and is mediated via SPATA2. Interacts with SPATA2 (via the PUB domain); the interaction is direct and recruits CYLD to the LUBAC complex, thereby regulating TNF-alpha-induced necroptosis. Ubiquitinated. Polyubiquitinated in hepatocytes treated with palmitic acid. Ubiquitination is mediated by E3 ligase TRIM47 and leads to proteasomal degradation. Post-translationally, phosphorylated on several serine residues by IKKA and/or IKKB in response to immune stimuli. Phosphorylation requires IKBKG. Phosphorylation abolishes TRAF2 deubiquitination, interferes with the activation of Jun kinases, and strongly reduces CD40-dependent gene activation by NF-kappa-B. In terms of tissue distribution, detected in fetal brain, testis, and skeletal muscle, and at a lower level in adult brain, leukocytes, liver, heart, kidney, spleen, ovary and lung. Isoform 2 is found in all tissues except kidney.

It localises to the cytoplasm. The protein resides in the perinuclear region. The protein localises to the cytoskeleton. Its subcellular location is the cell membrane. It is found in the microtubule organizing center. It localises to the centrosome. The protein resides in the spindle. The protein localises to the cilium basal body. The enzyme catalyses Thiol-dependent hydrolysis of ester, thioester, amide, peptide and isopeptide bonds formed by the C-terminal Gly of ubiquitin (a 76-residue protein attached to proteins as an intracellular targeting signal).. Inhibited by phosphorylation at serine residues. Functionally, deubiquitinase that specifically cleaves 'Lys-63'- and linear 'Met-1'-linked polyubiquitin chains and is involved in NF-kappa-B activation and TNF-alpha-induced necroptosis. Negatively regulates NF-kappa-B activation by deubiquitinating upstream signaling factors. Contributes to the regulation of cell survival, proliferation and differentiation via its effects on NF-kappa-B activation. Negative regulator of Wnt signaling. Inhibits HDAC6 and thereby promotes acetylation of alpha-tubulin and stabilization of microtubules. Plays a role in the regulation of microtubule dynamics, and thereby contributes to the regulation of cell proliferation, cell polarization, cell migration, and angiogenesis. Required for normal cell cycle progress and normal cytokinesis. Inhibits nuclear translocation of NF-kappa-B. Plays a role in the regulation of inflammation and the innate immune response, via its effects on NF-kappa-B activation. Dispensable for the maturation of intrathymic natural killer cells, but required for the continued survival of immature natural killer cells. Negatively regulates TNFRSF11A signaling and osteoclastogenesis. Involved in the regulation of ciliogenesis, allowing ciliary basal bodies to migrate and dock to the plasma membrane; this process does not depend on NF-kappa-B activation. Ability to remove linear ('Met-1'-linked) polyubiquitin chains regulates innate immunity and TNF-alpha-induced necroptosis: recruited to the LUBAC complex via interaction with SPATA2 and restricts linear polyubiquitin formation on target proteins. Regulates innate immunity by restricting linear polyubiquitin formation on RIPK2 in response to NOD2 stimulation. Involved in TNF-alpha-induced necroptosis by removing linear ('Met-1'-linked) polyubiquitin chains from RIPK1, thereby regulating the kinase activity of RIPK1. Negatively regulates intestinal inflammation by removing 'Lys-63' linked polyubiquitin chain of NLRP6, thereby reducing the interaction between NLRP6 and PYCARD/ASC and formation of the NLRP6 inflammasome. Does not catalyze deubiquitination of heterotypic 'Lys-63'-/'Lys-48'-linked branched ubiquitin chains. Removes 'Lys-63' linked polyubiquitin chain of MAP3K7, which inhibits phosphorylation and blocks downstream activation of the JNK-p38 kinase cascades. Also removes 'Lys-63'-linked polyubiquitin chains of MAP3K1 and MA3P3K3, which inhibit their interaction with MAP2K1 and MAP2K2. This chain is Ubiquitin carboxyl-terminal hydrolase CYLD, found in Homo sapiens (Human).